The following is a 205-amino-acid chain: Protein GrpE (205 aa).

The interval 172-205 (KGSTGPGAPAEPAAAPNPYASNGADTGGSFDTKA) is disordered. Residues 177 to 195 (PGAPAEPAAAPNPYASNGA) show a composition bias toward low complexity.

Belongs to the GrpE family. As to quaternary structure, homodimer.

The protein localises to the cytoplasm. Functionally, participates actively in the response to hyperosmotic and heat shock by preventing the aggregation of stress-denatured proteins, in association with DnaK and GrpE. It is the nucleotide exchange factor for DnaK and may function as a thermosensor. Unfolded proteins bind initially to DnaJ; upon interaction with the DnaJ-bound protein, DnaK hydrolyzes its bound ATP, resulting in the formation of a stable complex. GrpE releases ADP from DnaK; ATP binding to DnaK triggers the release of the substrate protein, thus completing the reaction cycle. Several rounds of ATP-dependent interactions between DnaJ, DnaK and GrpE are required for fully efficient folding. The chain is Protein GrpE from Caulobacter sp. (strain K31).